A 162-amino-acid polypeptide reads, in one-letter code: NADH-quinone oxidoreductase subunit I 2 (162 aa).

4Fe-4S ferredoxin-type domains lie at 52–82 (LRRYPNGEERCIACKLCEAICPAQAITIEAG) and 93–122 (VRYDIDMVKCIYCGLCQEACPVDAIVEGPN). C62, C65, C68, C72, C102, C105, C108, and C112 together coordinate [4Fe-4S] cluster.

It belongs to the complex I 23 kDa subunit family. NDH-1 is composed of 14 different subunits. Subunits NuoA, H, J, K, L, M, N constitute the membrane sector of the complex. Requires [4Fe-4S] cluster as cofactor.

Its subcellular location is the cell inner membrane. The catalysed reaction is a quinone + NADH + 5 H(+)(in) = a quinol + NAD(+) + 4 H(+)(out). Its function is as follows. NDH-1 shuttles electrons from NADH, via FMN and iron-sulfur (Fe-S) centers, to quinones in the respiratory chain. The immediate electron acceptor for the enzyme in this species is believed to be ubiquinone. Couples the redox reaction to proton translocation (for every two electrons transferred, four hydrogen ions are translocated across the cytoplasmic membrane), and thus conserves the redox energy in a proton gradient. The polypeptide is NADH-quinone oxidoreductase subunit I 2 (Rhodopseudomonas palustris (strain BisB5)).